The chain runs to 739 residues: Ankyrin repeat and SAM domain-containing protein 6 (739 aa).

8 ANK repeats span residues 1–30 (MGASVLAMAARGGHTHTVKLLLENGAFVDD), 57–86 (LEVRALLAAAQHGQGAAVALLLDWGSDARV), 91–120 (TGWSALMLAAAGGSLSVCQQLVERGADPDH), 124–156 (LGNTALEVALQLRRRDVQKYLDNITSVRPRPDD), 158–188 (KKRPDVFHALKLGNAQLVKEIVEQDAAQVDV), 192–221 (DGASPLMMAAVSGQLEVVQLLVEKRADVDR), 226–255 (HGWTALMQATYHGNKEVVKFLLSQGADVQL), and 259–290 (NGYTAFDLVMLLNDPDTELVRLLASVCMLVDK). The span at 295-305 (QRGKSALRRRA) shows a compositional bias: basic residues. Disordered regions lie at residues 295–320 (QRGKSALRRRASAGTPSPPEDKTGLK) and 449–645 (LRDA…ITDE). The span at 462-478 (PGRSSAGSDTASISRVV) shows a compositional bias: polar residues. Low complexity-rich tracts occupy residues 490–506 (GPSPSNSGSYNSAHSSG) and 582–592 (SSRSKSTSPTL). Pro residues predominate over residues 593 to 603 (TPSPSPTPAHT). Residues 604–641 (PAPAHTPAHRPTGASADSQGSASTQQRSRSSGGSSSGT) are compositionally biased toward low complexity. One can recognise an SAM domain in the interval 643–706 (TDEDELSGIL…LAAISELNAG (64 aa)).

Its subcellular location is the cell projection. The protein localises to the cilium. Functionally, required for renal function. The chain is Ankyrin repeat and SAM domain-containing protein 6 (anks6) from Danio rerio (Zebrafish).